The chain runs to 146 residues: Large ribosomal subunit protein bL21 (146 aa).

The disordered stretch occupies residues 103 to 146 (DGKSPTIGPRPKKEKAVEPVEGASDDKPRRAAKKTAAKTAEDAD). The segment covering 116–131 (EKAVEPVEGASDDKPR) has biased composition (basic and acidic residues).

This sequence belongs to the bacterial ribosomal protein bL21 family. Part of the 50S ribosomal subunit. Contacts protein L20.

In terms of biological role, this protein binds to 23S rRNA in the presence of protein L20. In Nitrobacter winogradskyi (strain ATCC 25391 / DSM 10237 / CIP 104748 / NCIMB 11846 / Nb-255), this protein is Large ribosomal subunit protein bL21.